Consider the following 221-residue polypeptide: MTIEVLDRGFVKLLDHMGDDFSAVKAARISHGRDLIDEERDRKLIEYLLRSGHESPFEHIVFTFHIKCPIFVARQWMRHRIASYNELSGRYTELAEEFYLPDLYKRYGERLNENDLQKASKLIEESYKKSHEAYKCLIDMKIPKELARVVLPFATYTQFIWSVNARSLMNFLSLRADSHSQWEMQQFALAVAQVFKSICPWTYESFIRYRYEGDLLKGVNP.

Positions 9 to 209 (GFVKLLDHMG…PWTYESFIRY (201 aa)) constitute a ThyX domain. FAD contacts are provided by residues S55, 78–80 (RHR), and E86. DUMP-binding positions include 75–78 (QWMR), 86–90 (ELSGR), and R148. A ThyX motif motif is present at residues 78-88 (RHRIASYNELS). FAD contacts are provided by residues 164-166 (NAR) and N170. DUMP is bound at residue R175. R175 (involved in ionization of N3 of dUMP, leading to its activation) is an active-site residue.

The protein belongs to the thymidylate synthase ThyX family. Homotetramer. It depends on FAD as a cofactor.

The enzyme catalyses dUMP + (6R)-5,10-methylene-5,6,7,8-tetrahydrofolate + NADPH + H(+) = dTMP + (6S)-5,6,7,8-tetrahydrofolate + NADP(+). Its pathway is pyrimidine metabolism; dTTP biosynthesis. In terms of biological role, catalyzes the reductive methylation of 2'-deoxyuridine-5'-monophosphate (dUMP) to 2'-deoxythymidine-5'-monophosphate (dTMP) while utilizing 5,10-methylenetetrahydrofolate (mTHF) as the methyl donor, and NADPH and FADH(2) as the reductant. The sequence is that of Flavin-dependent thymidylate synthase from Pseudothermotoga lettingae (strain ATCC BAA-301 / DSM 14385 / NBRC 107922 / TMO) (Thermotoga lettingae).